Consider the following 410-residue polypeptide: Large ribosomal subunit protein uL4 (410 aa).

It belongs to the universal ribosomal protein uL4 family.

Its subcellular location is the cytoplasm. This chain is Large ribosomal subunit protein uL4 (RPL4), found in Tetrahymena thermophila (strain SB210).